Reading from the N-terminus, the 285-residue chain is 2-dehydro-3-deoxyphosphooctonate aldolase (285 aa).

The protein belongs to the KdsA family.

The protein localises to the cytoplasm. It catalyses the reaction D-arabinose 5-phosphate + phosphoenolpyruvate + H2O = 3-deoxy-alpha-D-manno-2-octulosonate-8-phosphate + phosphate. The protein operates within carbohydrate biosynthesis; 3-deoxy-D-manno-octulosonate biosynthesis; 3-deoxy-D-manno-octulosonate from D-ribulose 5-phosphate: step 2/3. It functions in the pathway bacterial outer membrane biogenesis; lipopolysaccharide biosynthesis. This chain is 2-dehydro-3-deoxyphosphooctonate aldolase, found in Verminephrobacter eiseniae (strain EF01-2).